The primary structure comprises 104 residues: Pole-localizer protein TmaR (104 aa).

Coiled coils occupy residues 13 to 43 and 76 to 96; these read RKNKLKRELLDNEKKVRDNRKRVELLENLLD and SAEISKARRDISRRIRELTEE.

This sequence belongs to the pole-localizer TmaR family.

Its subcellular location is the cytoplasm. Pole-localizer protein involved in the regulation of several cellular processes. The sequence is that of Pole-localizer protein TmaR from Vibrio vulnificus (strain CMCP6).